The chain runs to 184 residues: Ras-related protein O-Krev (184 aa).

A GTP-binding site is contributed by 10-17; the sequence is GSGGVGKS. The Effector region motif lies at 32–40; the sequence is YDPTIEDSY. Residues 57-61 and 116-119 each bind GTP; these read DTAGT and NKCD. Cysteine 181 is subject to Cysteine methyl ester. Cysteine 181 carries S-geranylgeranyl cysteine lipidation. Positions 182–184 are cleaved as a propeptide — removed in mature form; the sequence is TLL.

The protein belongs to the small GTPase superfamily. Ras family.

It is found in the cell membrane. It carries out the reaction GTP + H2O = GDP + phosphate + H(+). The chain is Ras-related protein O-Krev from Diplobatis ommata (Ocellated electric ray).